A 334-amino-acid polypeptide reads, in one-letter code: Protein-methionine-sulfoxide reductase catalytic subunit MsrP (334 aa).

Residues 1-44 (MKKIRKLTEADVTAESAFFMQRRQVLKALGISAAALSLPNAAHA) constitute a signal peptide (tat-type signal). Residues Asn-88, 91–92 (YE), Cys-146, Thr-181, Asn-233, Arg-238, and 249–251 (GIK) each bind Mo-molybdopterin.

Belongs to the MsrP family. Heterodimer of a catalytic subunit (MsrP) and a heme-binding subunit (MsrQ). Mo-molybdopterin is required as a cofactor. Post-translationally, predicted to be exported by the Tat system. The position of the signal peptide cleavage has not been experimentally proven.

The protein localises to the periplasm. It carries out the reaction L-methionyl-[protein] + a quinone + H2O = L-methionyl-(S)-S-oxide-[protein] + a quinol. It catalyses the reaction L-methionyl-[protein] + a quinone + H2O = L-methionyl-(R)-S-oxide-[protein] + a quinol. Part of the MsrPQ system that repairs oxidized periplasmic proteins containing methionine sulfoxide residues (Met-O), using respiratory chain electrons. Thus protects these proteins from oxidative-stress damage caused by reactive species of oxygen and chlorine generated by the host defense mechanisms. MsrPQ is essential for the maintenance of envelope integrity under bleach stress, rescuing a wide series of structurally unrelated periplasmic proteins from methionine oxidation, including the primary periplasmic chaperone SurA and the lipoprotein Pal. The catalytic subunit MsrP is non-stereospecific, being able to reduce both (R-) and (S-) diastereoisomers of methionine sulfoxide. This chain is Protein-methionine-sulfoxide reductase catalytic subunit MsrP, found in Escherichia fergusonii (strain ATCC 35469 / DSM 13698 / CCUG 18766 / IAM 14443 / JCM 21226 / LMG 7866 / NBRC 102419 / NCTC 12128 / CDC 0568-73).